Consider the following 463-residue polypeptide: Endoglucanase (463 aa).

The N-terminal stretch at 1–27 (MVEKRKIFTVLCACGIGFTSYTSCISA) is a signal peptide. Positions 28 to 55 (AAIDNDTLINNGHKINSSIITNSSQVSA) are excised as a propeptide. E130 serves as the catalytic Proton donor. The active-site Nucleophile is the D191.

It belongs to the glycosyl hydrolase 8 (cellulase D) family. The N- and the C-terminus may be subjected to proteolysis.

It carries out the reaction Endohydrolysis of (1-&gt;4)-beta-D-glucosidic linkages in cellulose, lichenin and cereal beta-D-glucans.. The polypeptide is Endoglucanase (Bacillus sp. (strain KSM-330)).